Here is a 216-residue protein sequence, read N- to C-terminus: RNA pyrophosphohydrolase (216 aa).

Positions 6–149 (GFRPNVGIIL…KRDVYQLALT (144 aa)) constitute a Nudix hydrolase domain. The short motif at 38-59 (GGIKYGETPMQAMYRELHEETG) is the Nudix box element. A disordered region spans residues 159 to 188 (AQRTDKSRGPRAPRYPRVANGHAASEAPAA).

Belongs to the Nudix hydrolase family. RppH subfamily. A divalent metal cation is required as a cofactor.

Accelerates the degradation of transcripts by removing pyrophosphate from the 5'-end of triphosphorylated RNA, leading to a more labile monophosphorylated state that can stimulate subsequent ribonuclease cleavage. The sequence is that of RNA pyrophosphohydrolase from Burkholderia mallei (strain NCTC 10247).